A 129-amino-acid polypeptide reads, in one-letter code: Large ribosomal subunit protein bL20 (129 aa).

The protein belongs to the bacterial ribosomal protein bL20 family.

Functionally, binds directly to 23S ribosomal RNA and is necessary for the in vitro assembly process of the 50S ribosomal subunit. It is not involved in the protein synthesizing functions of that subunit. This chain is Large ribosomal subunit protein bL20, found in Mycolicibacterium smegmatis (strain ATCC 700084 / mc(2)155) (Mycobacterium smegmatis).